The following is a 188-amino-acid chain: MSIKSDKWIRRMAQEHGMIEPFVERQIRGEGDERVISYGVSSYGYDVRCADEFKVFTNINSAIVDPKNFDEKSFVDVKSDVCIIPPNSFALARTVEFFRIPRDVLTICLGKSTYARCGIIVNVTPLEPEWEGHVTLEFSNTTTLPAKIYANEGVAQMLFLQSDEACEVSYKDRAGKYQGQRGVTLPRA.

Residues 111–116, 135–137, glutamine 156, tyrosine 170, and glutamine 180 each bind dCTP; these read KSTYAR and TLE. Catalysis depends on glutamate 137, which acts as the Proton donor/acceptor.

This sequence belongs to the dCTP deaminase family. In terms of assembly, homotrimer.

The catalysed reaction is dCTP + H2O + H(+) = dUTP + NH4(+). Its pathway is pyrimidine metabolism; dUMP biosynthesis; dUMP from dCTP (dUTP route): step 1/2. Functionally, catalyzes the deamination of dCTP to dUTP. The protein is dCTP deaminase of Pseudomonas fluorescens (strain SBW25).